The primary structure comprises 211 residues: Suppressor of RNA silencing p3 (211 aa).

This sequence belongs to the tenuiviruses p3 protein family. In terms of assembly, homodimer.

It is found in the host cytoplasm. Its function is as follows. Acts as a suppressor of RNA-mediated gene silencing, also known as post-transcriptional gene silencing (PTGS), presumably through the binding of dsRNA. The sequence is that of Suppressor of RNA silencing p3 from Avena sativa (Oat).